The following is a 63-amino-acid chain: Large ribosomal subunit protein uL29 (63 aa).

It belongs to the universal ribosomal protein uL29 family.

This Serratia proteamaculans (strain 568) protein is Large ribosomal subunit protein uL29.